Here is a 323-residue protein sequence, read N- to C-terminus: uncharacterized protein (323 aa).

The interval 1-21 is disordered; it reads MGSYYSTESTKSNESNETTNN. A lipid anchor (N-myristoyl glycine; by host) is attached at G2.

This is an uncharacterized protein from Acanthamoeba polyphaga (Amoeba).